The chain runs to 176 residues: Ribosome maturation factor RimM (176 aa).

In terms of domain architecture, PRC barrel spans 96 to 176 (PEDEFYWRDL…QILVDWDPDF (81 aa)).

It belongs to the RimM family. In terms of assembly, binds ribosomal protein uS19.

Its subcellular location is the cytoplasm. In terms of biological role, an accessory protein needed during the final step in the assembly of 30S ribosomal subunit, possibly for assembly of the head region. Essential for efficient processing of 16S rRNA. May be needed both before and after RbfA during the maturation of 16S rRNA. It has affinity for free ribosomal 30S subunits but not for 70S ribosomes. The protein is Ribosome maturation factor RimM of Shewanella woodyi (strain ATCC 51908 / MS32).